The following is a 146-amino-acid chain: Snake venom vascular endothelial growth factor toxin TfsvVEGF (146 aa).

Residues 1–24 (MAAYLLAVAILFCIQGWPSGTVQG) form the signal peptide. Residue Gln-25 is modified to Pyrrolidone carboxylic acid. 3 disulfide bridges follow: Cys-38-Cys-80, Cys-69-Cys-115, and Cys-73-Cys-117. The span at 118-139 (RPRSPGDVNNGKDKRNPEEGGP) shows a compositional bias: basic and acidic residues. The tract at residues 118 to 146 (RPRSPGDVNNGKDKRNPEEGGPRARFPFV) is disordered.

It belongs to the PDGF/VEGF growth factor family. Snake venom VEGF subfamily. As to quaternary structure, homodimer; disulfide-linked. Interacts with VEGF receptor-1 (FLT1) with a high affinity, whereas it binds to VEGF receptor-2 (KDR) with a low affinity. Does not bind VEGF receptor-3 (FLT4). Expressed by the venom gland.

Its subcellular location is the secreted. Snake venom VEGFs may contribute to venom dispersion and prey subjugation by inducing vascular permeability and hypotension. This protein strongly increases vascular permeability, and weakly stimulates angiogenesis. Interacts with VEGF receptor-1 (FLT1) with a high affinity, whereas it binds to VEGF receptor-2 (KDR) with a low affinity. Stimulates autophosphorylation of VEGF receptor-1 (VEGFR-1/FLT1), and VEGF receptor-2 (VEGFR-2/KDR). The sequence is that of Snake venom vascular endothelial growth factor toxin TfsvVEGF from Protobothrops flavoviridis (Habu).